Reading from the N-terminus, the 382-residue chain is Galactokinase (382 aa).

34 to 37 contributes to the substrate binding site; it reads EHTD. 124–130 serves as a coordination point for ATP; the sequence is GAGLSSS. 2 residues coordinate Mg(2+): Ser-130 and Glu-162. The active-site Proton acceptor is the Asp-174. Residue Tyr-223 coordinates substrate.

This sequence belongs to the GHMP kinase family. GalK subfamily.

The protein localises to the cytoplasm. It carries out the reaction alpha-D-galactose + ATP = alpha-D-galactose 1-phosphate + ADP + H(+). Its pathway is carbohydrate metabolism; galactose metabolism. Its function is as follows. Catalyzes the transfer of the gamma-phosphate of ATP to D-galactose to form alpha-D-galactose-1-phosphate (Gal-1-P). This chain is Galactokinase, found in Escherichia coli O7:K1 (strain IAI39 / ExPEC).